Reading from the N-terminus, the 452-residue chain is Bifunctional protein GlmU (452 aa).

Residues 1 to 226 form a pyrophosphorylase region; it reads MVAVAILAAG…SQEILGINDR (226 aa). Residues 7–10, Lys-21, Gln-73, and 78–79 contribute to the UDP-N-acetyl-alpha-D-glucosamine site; these read LAAG and GT. Asp-103 is a binding site for Mg(2+). Residues Gly-140, Glu-155, Asn-170, and Asn-224 each contribute to the UDP-N-acetyl-alpha-D-glucosamine site. Residue Asn-224 participates in Mg(2+) binding. Residues 227–247 are linker; the sequence is LQLADSFRILQERIRQQWMLA. The segment at 248–452 is N-acetyltransferase; that stretch reads GVTLVDPTSI…ENWSTPTTEQ (205 aa). UDP-N-acetyl-alpha-D-glucosamine-binding residues include Arg-329 and Lys-347. His-359 acts as the Proton acceptor in catalysis. Residues Tyr-362 and Asn-373 each contribute to the UDP-N-acetyl-alpha-D-glucosamine site. Acetyl-CoA-binding positions include Ala-376, 382 to 383, Ala-419, and Arg-436; that span reads NY.

The protein in the N-terminal section; belongs to the N-acetylglucosamine-1-phosphate uridyltransferase family. In the C-terminal section; belongs to the transferase hexapeptide repeat family. Homotrimer. The cofactor is Mg(2+).

It is found in the cytoplasm. It carries out the reaction alpha-D-glucosamine 1-phosphate + acetyl-CoA = N-acetyl-alpha-D-glucosamine 1-phosphate + CoA + H(+). It catalyses the reaction N-acetyl-alpha-D-glucosamine 1-phosphate + UTP + H(+) = UDP-N-acetyl-alpha-D-glucosamine + diphosphate. It functions in the pathway nucleotide-sugar biosynthesis; UDP-N-acetyl-alpha-D-glucosamine biosynthesis; N-acetyl-alpha-D-glucosamine 1-phosphate from alpha-D-glucosamine 6-phosphate (route II): step 2/2. It participates in nucleotide-sugar biosynthesis; UDP-N-acetyl-alpha-D-glucosamine biosynthesis; UDP-N-acetyl-alpha-D-glucosamine from N-acetyl-alpha-D-glucosamine 1-phosphate: step 1/1. Its pathway is bacterial outer membrane biogenesis; LPS lipid A biosynthesis. Its function is as follows. Catalyzes the last two sequential reactions in the de novo biosynthetic pathway for UDP-N-acetylglucosamine (UDP-GlcNAc). The C-terminal domain catalyzes the transfer of acetyl group from acetyl coenzyme A to glucosamine-1-phosphate (GlcN-1-P) to produce N-acetylglucosamine-1-phosphate (GlcNAc-1-P), which is converted into UDP-GlcNAc by the transfer of uridine 5-monophosphate (from uridine 5-triphosphate), a reaction catalyzed by the N-terminal domain. The chain is Bifunctional protein GlmU from Synechococcus sp. (strain ATCC 27144 / PCC 6301 / SAUG 1402/1) (Anacystis nidulans).